We begin with the raw amino-acid sequence, 185 residues long: Protein-lysine palmitoyltransferase CyaC (185 aa).

Active-site residues include histidine 33 and aspartate 102.

The protein belongs to the RTX toxin acyltransferase family. Homodimer.

The protein resides in the cytoplasm. It catalyses the reaction hexadecanoyl-[ACP] + L-lysyl-[protein] = N(6)-hexadecanoyl-L-lysyl-[protein] + holo-[ACP] + H(+). The enzyme catalyses (9Z)-hexadecenoyl-[ACP] + L-lysyl-[protein] = N(6)-[(9Z)-hexadecenoyl]-L-lysyl-[protein] + holo-[ACP] + H(+). Protein-lysine palmitoyltransferase that catalyzes palmitoylation of the protoxin (CyaA) at two internal lysine residues, thereby converting it to the active toxin. This is Protein-lysine palmitoyltransferase CyaC from Bordetella bronchiseptica (strain ATCC BAA-588 / NCTC 13252 / RB50) (Alcaligenes bronchisepticus).